The sequence spans 241 residues: Probable transcriptional regulatory protein Rmet_0785 (241 aa).

It belongs to the TACO1 family.

Its subcellular location is the cytoplasm. The protein is Probable transcriptional regulatory protein Rmet_0785 of Cupriavidus metallidurans (strain ATCC 43123 / DSM 2839 / NBRC 102507 / CH34) (Ralstonia metallidurans).